The chain runs to 126 residues: Protein ApaG (126 aa).

The ApaG domain occupies 2–126 (DVSQPRIQIQ…FRLAVPNILN (125 aa)).

The sequence is that of Protein ApaG from Vibrio vulnificus (strain CMCP6).